A 346-amino-acid chain; its full sequence is Tetraacyldisaccharide 4'-kinase (346 aa).

62–69 (TAGGTGKT) serves as a coordination point for ATP.

Belongs to the LpxK family.

The catalysed reaction is a lipid A disaccharide + ATP = a lipid IVA + ADP + H(+). It functions in the pathway glycolipid biosynthesis; lipid IV(A) biosynthesis; lipid IV(A) from (3R)-3-hydroxytetradecanoyl-[acyl-carrier-protein] and UDP-N-acetyl-alpha-D-glucosamine: step 6/6. In terms of biological role, transfers the gamma-phosphate of ATP to the 4'-position of a tetraacyldisaccharide 1-phosphate intermediate (termed DS-1-P) to form tetraacyldisaccharide 1,4'-bis-phosphate (lipid IVA). The polypeptide is Tetraacyldisaccharide 4'-kinase (Xanthomonas oryzae pv. oryzae (strain MAFF 311018)).